We begin with the raw amino-acid sequence, 431 residues long: Adenylosuccinate synthetase (431 aa).

GTP contacts are provided by residues 12–18 (GDEGKGK) and 40–42 (GHT). Aspartate 13 (proton acceptor) is an active-site residue. 2 residues coordinate Mg(2+): aspartate 13 and glycine 40. Residues 13 to 16 (DEGK), 38 to 41 (NAGH), threonine 130, arginine 144, glutamine 225, threonine 240, and arginine 304 contribute to the IMP site. The active-site Proton donor is histidine 41. 300–306 (ATTGRPR) serves as a coordination point for substrate. GTP-binding positions include arginine 306, 332–334 (KLD), and 414–416 (SVG).

Belongs to the adenylosuccinate synthetase family. As to quaternary structure, homodimer. The cofactor is Mg(2+).

It localises to the cytoplasm. The catalysed reaction is IMP + L-aspartate + GTP = N(6)-(1,2-dicarboxyethyl)-AMP + GDP + phosphate + 2 H(+). It functions in the pathway purine metabolism; AMP biosynthesis via de novo pathway; AMP from IMP: step 1/2. Functionally, plays an important role in the de novo pathway of purine nucleotide biosynthesis. Catalyzes the first committed step in the biosynthesis of AMP from IMP. This is Adenylosuccinate synthetase from Geotalea daltonii (strain DSM 22248 / JCM 15807 / FRC-32) (Geobacter daltonii).